Reading from the N-terminus, the 171-residue chain is bZIP transcription factor 2 (171 aa).

A compositionally biased stretch (low complexity) spans 1-24; sequence MASSSSTYRSSSSSDGGNNNPSDS. The interval 1-54 is disordered; the sequence is MASSSSTYRSSSSSDGGNNNPSDSVVTVDERKRKRMLSNRESARRSRMRKQKHV. The bZIP domain maps to 29–92; the sequence is DERKRKRMLS…MKIQAENSVL (64 aa). The tract at residues 31–52 is basic motif; that stretch reads RKRKRMLSNRESARRSRMRKQK. Residues 57–71 form a leucine-zipper region; that stretch reads LTAQINQLSNDNRQI.

Forms heterodimers with BZIP9, BZIP10, BZIP25 and BZIP63. Component of a ternary complex composed of BZIP2-BZIP63 heterodimer and KIN10.

The protein resides in the nucleus. In terms of biological role, transcription factor that binds to specific DNA sequences in target gene promoters. BZIP2-BZIP63-KIN10 complex binds to the ETFQO promoter to up-regulate its transcription. The sequence is that of bZIP transcription factor 2 from Arabidopsis thaliana (Mouse-ear cress).